Here is a 612-residue protein sequence, read N- to C-terminus: Protein MUK1 (612 aa).

Residues glutamate 40 to cysteine 50 are compositionally biased toward basic and acidic residues. A disordered region spans residues glutamate 40–lysine 66. Residues asparagine 55 to lysine 66 show a composition bias toward polar residues. A phosphoserine mark is found at serine 67, serine 163, serine 185, and serine 245. The VPS9 domain occupies threonine 273–serine 414. The disordered stretch occupies residues isoleucine 494–arginine 560. Low complexity predominate over residues asparagine 503 to asparagine 517. Residues isoleucine 518–leucine 529 are compositionally biased toward polar residues. Residues serine 530 to serine 542 are compositionally biased toward basic and acidic residues. Residues arginine 543–serine 554 are compositionally biased toward low complexity.

The protein localises to the cytoplasm. In terms of biological role, putative GTPase-activating protein. The protein is Protein MUK1 (MUK1) of Saccharomyces cerevisiae (strain ATCC 204508 / S288c) (Baker's yeast).